The chain runs to 187 residues: Acetyl-CoA decarbonylase/synthase complex subunit epsilon (187 aa).

The residue at position 1 (M1) is a Blocked amino end (Met).

This sequence belongs to the CdhB family. In terms of assembly, heterotetramer of two alpha and two epsilon subunits. The ACDS complex is made up of alpha, epsilon, beta, gamma and delta subunits with a probable stoichiometry of (alpha(2)epsilon(2))(4)-beta(8)-(gamma(1)delta(1))(8).

Its function is as follows. Part of a complex that catalyzes the reversible cleavage of acetyl-CoA, allowing autotrophic growth from CO(2). The alpha-epsilon subcomponent functions as a carbon monoxide dehydrogenase. The precise role of the epsilon subunit is unclear; it may have a stabilizing role within the alpha(2)epsilon(2) component and/or be involved in electron transfer to FAD during a potential FAD-mediated CO oxidation. The polypeptide is Acetyl-CoA decarbonylase/synthase complex subunit epsilon (Methanothrix soehngenii (Methanosaeta concilii)).